The chain runs to 1301 residues: DNA-directed RNA polymerase subunit beta (1301 aa).

This sequence belongs to the RNA polymerase beta chain family. The RNAP catalytic core consists of 2 alpha, 1 beta, 1 beta' and 1 omega subunit. When a sigma factor is associated with the core the holoenzyme is formed, which can initiate transcription.

The catalysed reaction is RNA(n) + a ribonucleoside 5'-triphosphate = RNA(n+1) + diphosphate. Its function is as follows. DNA-dependent RNA polymerase catalyzes the transcription of DNA into RNA using the four ribonucleoside triphosphates as substrates. In Chlorobium luteolum (strain DSM 273 / BCRC 81028 / 2530) (Pelodictyon luteolum), this protein is DNA-directed RNA polymerase subunit beta.